The following is a 934-amino-acid chain: Serine/threonine-protein kinase PknD (934 aa).

Positions 4-296 constitute a Protein kinase domain; the sequence is YELIRLIGKG…ELRQALQPYL (293 aa). Residues 10–18 and Lys-33 each bind ATP; that span reads IGKGGMGEV. The Proton acceptor role is filled by Asp-138.

Belongs to the protein kinase superfamily. Ser/Thr protein kinase family. Interacts with Pkn1. Autophosphorylated on serine and threonine residues. Present in elementary bodies 40 hours post-infection as 2 bands of approximately 55 to 60 and 45 to 50 kDa, which may be due to differential phosphorylation as well as degradation; an enzymatically active full-length protein can also be detected.

The catalysed reaction is L-seryl-[protein] + ATP = O-phospho-L-seryl-[protein] + ADP + H(+). The enzyme catalyses L-threonyl-[protein] + ATP = O-phospho-L-threonyl-[protein] + ADP + H(+). Its function is as follows. Together with the serine/threonine kinase Pkn1, may play a role in the specific interactions with host proteins during intracellular growth. Autophosphorylates and also phosphorylates Pkn1. This is Serine/threonine-protein kinase PknD from Chlamydia trachomatis serovar L2 (strain ATCC VR-902B / DSM 19102 / 434/Bu).